The following is a 487-amino-acid chain: Glycogen synthase (487 aa).

K15 is a binding site for ADP-alpha-D-glucose.

This sequence belongs to the glycosyltransferase 1 family. Bacterial/plant glycogen synthase subfamily.

The enzyme catalyses [(1-&gt;4)-alpha-D-glucosyl](n) + ADP-alpha-D-glucose = [(1-&gt;4)-alpha-D-glucosyl](n+1) + ADP + H(+). The protein operates within glycan biosynthesis; glycogen biosynthesis. In terms of biological role, synthesizes alpha-1,4-glucan chains using ADP-glucose. The protein is Glycogen synthase of Leptothrix cholodnii (strain ATCC 51168 / LMG 8142 / SP-6) (Leptothrix discophora (strain SP-6)).